The following is a 222-amino-acid chain: Eukaryotic translation initiation factor 3 subunit K (222 aa).

Positions Tyr46–Lys208 constitute a PCI domain.

It belongs to the eIF-3 subunit K family. As to quaternary structure, component of the eukaryotic translation initiation factor 3 (eIF-3) complex. The eIF-3 complex interacts with pix.

It localises to the cytoplasm. In terms of biological role, component of the eukaryotic translation initiation factor 3 (eIF-3) complex, which is involved in protein synthesis of a specialized repertoire of mRNAs and, together with other initiation factors, stimulates binding of mRNA and methionyl-tRNAi to the 40S ribosome. The eIF-3 complex specifically targets and initiates translation of a subset of mRNAs involved in cell proliferation. The polypeptide is Eukaryotic translation initiation factor 3 subunit K (Drosophila mojavensis (Fruit fly)).